The chain runs to 493 residues: 3-octaprenyl-4-hydroxybenzoate carboxy-lyase (493 aa).

Position 172 (Asn172) interacts with Mn(2+). Prenylated FMN is bound by residues 175–177 (IYR), 189–191 (RWL), and 194–195 (RG). Mn(2+) is bound at residue Glu238. Asp287 serves as the catalytic Proton donor.

This sequence belongs to the UbiD family. In terms of assembly, homohexamer. Prenylated FMN is required as a cofactor. It depends on Mn(2+) as a cofactor.

The protein resides in the cell membrane. The catalysed reaction is a 4-hydroxy-3-(all-trans-polyprenyl)benzoate + H(+) = a 2-(all-trans-polyprenyl)phenol + CO2. Its pathway is cofactor biosynthesis; ubiquinone biosynthesis. In terms of biological role, catalyzes the decarboxylation of 3-octaprenyl-4-hydroxy benzoate to 2-octaprenylphenol, an intermediate step in ubiquinone biosynthesis. The sequence is that of 3-octaprenyl-4-hydroxybenzoate carboxy-lyase from Cellvibrio japonicus (strain Ueda107) (Pseudomonas fluorescens subsp. cellulosa).